Here is a 161-residue protein sequence, read N- to C-terminus: Phosphohistidine phosphatase SixA (161 aa).

The protein belongs to the SixA phosphatase family.

Its function is as follows. Exhibits phosphohistidine phosphatase activity towards the HPt domain of the ArcB sensor involved in the multistep His-Asp phosphorelay. The protein is Phosphohistidine phosphatase SixA (sixA) of Escherichia coli (strain K12).